A 223-amino-acid chain; its full sequence is Putative C-type lectin protein 51 (223 aa).

An N-terminal signal peptide occupies residues M1–C31. The region spanning Q111 to G218 is the C-type lectin domain. Cysteines 193 and 209 form a disulfide.

This chain is Putative C-type lectin protein 51 (51), found in Equine herpesvirus 2 (strain 86/87) (EHV-2).